The sequence spans 483 residues: General transcription factor IIH subunit 4 (483 aa).

A disordered region spans residues 93–117; the sequence is PQQQQSSQQSSSQQQQQQQQQQQQT. Positions 94 to 116 are enriched in low complexity; the sequence is QQQQSSQQSSSQQQQQQQQQQQQ.

Belongs to the TFB2 family. Component of the 7-subunit TFIIH core complex composed of XPB/repB, XPD/repD, gtf2h1, gtf2h2, gtf2h3, gtf2h4 and gtf2h5, which is active in NER. The core complex associates with the 3-subunit CDK-activating kinase (CAK) module composed of cycH/cyclin H, cdk7 and mnat1 to form the 10-subunit holoenzyme (holo-TFIIH) active in transcription.

It localises to the nucleus. Functionally, component of the general transcription and DNA repair factor IIH (TFIIH) core complex, which is involved in general and transcription-coupled nucleotide excision repair (NER) of damaged DNA and, when complexed to CAK, in RNA transcription by RNA polymerase II. In NER, TFIIH acts by opening DNA around the lesion to allow the excision of the damaged oligonucleotide and its replacement by a new DNA fragment. In transcription, TFIIH has an essential role in transcription initiation. When the pre-initiation complex (PIC) has been established, TFIIH is required for promoter opening and promoter escape. Phosphorylation of the C-terminal tail (CTD) of the largest subunit of RNA polymerase II by the kinase module CAK controls the initiation of transcription. The polypeptide is General transcription factor IIH subunit 4 (gtf2h4) (Dictyostelium discoideum (Social amoeba)).